The primary structure comprises 424 residues: MGEVKPAKVENYSTGTDANTLFVDGERVLCFHGPLIYEAKVLKTKPDATPVEYYIHYAGWSKNWDEWVPENRVLKYNDDNVKRRQELARQCGERSKKDNKKGSAKAKKMEQMRNESRASTPSKDSNTSQSTASSTPTTSAGPGSKSEAGSTGTTTTNSTANSTTSRAHRKSTQSTPSTARPGTPSDKKEDPAAAETTEEEGPVAPKKKRMSEQRPSLTGSDVAEKPLPPTTTPSTPTTEPAPCVESEEAYAAKVEVKIKIPDELKHYLTDDWYAVVREHKLLELPAKVTVQQISEQYLAHKKSVKSTSASKEVAINDVLDGIVEYFNVMLGSQLLYKFERTQYADVMQKHPDTPLSELYGSFHLLRLFVRLGSMLSYSALDQQSMQNLLTHVQDFLKFLVKNSSIFFSMSNFINVDPEYVRNAQ.

One can recognise a Tudor-knot domain in the interval 23–73 (VDGERVLCFHGPLIYEAKVLKTKPDATPVEYYIHYAGWSKNWDEWVPENRV). The interval 88–243 (ARQCGERSKK…STPTTEPAPC (156 aa)) is disordered. Residues 97 to 106 (KDNKKGSAKA) show a composition bias toward basic residues. The segment covering 107 to 116 (KKMEQMRNES) has biased composition (basic and acidic residues). A Phosphoserine modification is found at serine 119. Low complexity predominate over residues 122-165 (SKDSNTSQSTASSTPTTSAGPGSKSEAGSTGTTTTNSTANSTTS). Residues threonine 175, threonine 183, threonine 196, and threonine 197 each carry the phosphothreonine modification. At serine 211 the chain carries Phosphoserine. The span at 232–242 (TPSTPTTEPAP) shows a compositional bias: low complexity. The residue at position 235 (threonine 235) is a Phosphothreonine. The 173-residue stretch at 252 to 424 (AKVEVKIKIP…VDPEYVRNAQ (173 aa)) folds into the MRG domain.

Component of the Tip60 chromatin-remodeling complex which contains the catalytic subunit Tip60 and the subunits Domino, Tra1, Brd8, E(Pc), DMAP1, Pontin, Reptin, Ing3, Act87E, BAP55, Mrg15, MrgBP, Gas41 and YL-1.

It localises to the nucleus. Functionally, part of the Tip60 chromatin-remodeling complex which is involved in DNA repair. Upon induction of DNA double-strand breaks, this complex acetylates phosphorylated H2AV in nucleosomes and exchanges it with unmodified H2AV. The sequence is that of NuA4 complex subunit EAF3 homolog (MRG15) from Drosophila melanogaster (Fruit fly).